The chain runs to 616 residues: Centrosomal protein of 70 kDa (616 aa).

Coiled coils occupy residues 96-210 (EETT…EEER) and 273-335 (NYKG…NIKL). A TPR repeat occupies 502–535 (NGVFPRMNEVYTRLGEMNNAVRNLQELLELDSSS).

Directly interacts with tubulin-gamma; this interaction determines centrosomal localization.

It is found in the cytoplasm. The protein resides in the cytoskeleton. It localises to the microtubule organizing center. Its subcellular location is the centrosome. Plays a role in the organization of both preexisting and nascent microtubules in interphase cells. During mitosis, required for the organization and orientation of the mitotic spindle. This chain is Centrosomal protein of 70 kDa (Cep70), found in Mus musculus (Mouse).